The primary structure comprises 170 residues: Large ribosomal subunit protein uL11 (170 aa).

Belongs to the universal ribosomal protein uL11 family. Part of the ribosomal stalk of the 50S ribosomal subunit. Interacts with L10 and the large rRNA to form the base of the stalk. L10 forms an elongated spine to which L12 dimers bind in a sequential fashion forming a multimeric L10(L12)X complex.

Its function is as follows. Forms part of the ribosomal stalk which helps the ribosome interact with GTP-bound translation factors. This is Large ribosomal subunit protein uL11 from Sulfolobus acidocaldarius (strain ATCC 33909 / DSM 639 / JCM 8929 / NBRC 15157 / NCIMB 11770).